Here is a 192-residue protein sequence, read N- to C-terminus: dTTP/UTP pyrophosphatase (192 aa).

Asp70 acts as the Proton acceptor in catalysis.

This sequence belongs to the Maf family. YhdE subfamily. A divalent metal cation is required as a cofactor.

It is found in the cytoplasm. It carries out the reaction dTTP + H2O = dTMP + diphosphate + H(+). The catalysed reaction is UTP + H2O = UMP + diphosphate + H(+). Its function is as follows. Nucleoside triphosphate pyrophosphatase that hydrolyzes dTTP and UTP. May have a dual role in cell division arrest and in preventing the incorporation of modified nucleotides into cellular nucleic acids. This is dTTP/UTP pyrophosphatase from Clostridium perfringens (strain ATCC 13124 / DSM 756 / JCM 1290 / NCIMB 6125 / NCTC 8237 / Type A).